A 349-amino-acid polypeptide reads, in one-letter code: MKLGDFDFDLPEELIATRPAVPRSSARLLVAEQDRISDGRVTDLLDWLAPGDRLVLNDTRVIPARLSGQRHRNSAQGPVSARIEVTLLEPQADGSWAGLLKPLKKIKIGETLRFSDALSAELVDVVDGQGRLRFNLAGDDFDAALAEAGAMPLPPYIAAKRPADEQDKTDYQTVWARNSGAVAAPTASLHFDEPLLKALSEKGVTFTYVTLHVGAGTFLPVKVEDVTTHKMHAEWGQVTPEAAAEIAATKAAGNRVIPVGTTALRLIESAARESGAITPWEGETDIFIYPGFEFRVADALMTNFHLPKSTLMMLVSALMGQDRIRAIYAHAVKERYRFFSYGDASLLIP.

The protein belongs to the QueA family. In terms of assembly, monomer.

It is found in the cytoplasm. The catalysed reaction is 7-aminomethyl-7-carbaguanosine(34) in tRNA + S-adenosyl-L-methionine = epoxyqueuosine(34) in tRNA + adenine + L-methionine + 2 H(+). It participates in tRNA modification; tRNA-queuosine biosynthesis. In terms of biological role, transfers and isomerizes the ribose moiety from AdoMet to the 7-aminomethyl group of 7-deazaguanine (preQ1-tRNA) to give epoxyqueuosine (oQ-tRNA). The sequence is that of S-adenosylmethionine:tRNA ribosyltransferase-isomerase from Ruegeria sp. (strain TM1040) (Silicibacter sp.).